A 502-amino-acid chain; its full sequence is CDP-diacylglycerol--glycerol-3-phosphate 3-phosphatidyltransferase (502 aa).

58–65 (STLYIGKE) lines the ATP pocket. PLD phosphodiesterase domains follow at residues 143 to 169 (GWGL…SRDY) and 410 to 443 (KGNT…TSRS). Active-site residues include H148, K150, and D155.

It belongs to the CDP-alcohol phosphatidyltransferase class-II family.

The protein localises to the mitochondrion. It catalyses the reaction a CDP-1,2-diacyl-sn-glycerol + sn-glycerol 3-phosphate = a 1,2-diacyl-sn-glycero-3-phospho-(1'-sn-glycero-3'-phosphate) + CMP + H(+). The protein operates within phospholipid metabolism; phosphatidylglycerol biosynthesis; phosphatidylglycerol from CDP-diacylglycerol: step 1/2. Functionally, functions in the biosynthesis of the anionic phospholipids phosphatidylglycerol and cardiolipin. This is CDP-diacylglycerol--glycerol-3-phosphate 3-phosphatidyltransferase (pgs1) from Schizosaccharomyces pombe (strain 972 / ATCC 24843) (Fission yeast).